A 377-amino-acid polypeptide reads, in one-letter code: MALNPEDLGSGFRHSKVSMFINEQMAKHDKGPDFYLENLSLSWEEVEDKFKVILEDSEVSNEAREACAWGTLALGVRFAHRQGCLQGHGVQWLQDLSSLHKMSALSLSPDLKQLIHQQEMAQKEVALQLQMAQAKLEEVQRERDLLRLKILQAELRALPNAVRPAVAIPPAVVRRGGIRTQWSSTKENLAEWMAAATGRPNERANMSDTALSGTITSPEEVLEDPNGSFMKLLGVMKCKNYPLKRQRLDLRPKKASMCSFSQSLNLRSTVSSEPFIVQLPASFTYSYESPFPAIPTTSQLPTTERQPHVYPYSMASDISHLSDMRIHRGDHQELPKDKRFSAFRRPGDWDCPWCKAVNFSRRENCFHCGKGIWLQNP.

Residues 92-377 are required for repression of transcription; sequence WLQDLSSLHK…CGKGIWLQNP (286 aa). The stretch at 122 to 156 forms a coiled coil; the sequence is QKEVALQLQMAQAKLEEVQRERDLLRLKILQAELR. One copy of the LRR repeat lies at 142–165; the sequence is ERDLLRLKILQAELRALPNAVRPA. Residues 345 to 369 form a RanBP2-type zinc finger; it reads RPGDWDCPWCKAVNFSRRENCFHCG. Positions 351, 354, 365, and 368 each coordinate Zn(2+).

Belongs to the TEX13 family. As to quaternary structure, interacts with CNOT1; the interaction may inhibit CNOT1 binding to mRNA and subsequently CNOT1-mediated mRNA degradation.

In terms of biological role, binds to ssRNA containing the consensus sequence 5'-AGGUAA-3'. Plays a role in transcriptional repression. Required for rapid sperm motility and timely degradation of mRNA via its interaction with CNOT1. This Mus musculus (Mouse) protein is Testis-expressed protein 13A.